The following is a 595-amino-acid chain: Guanylate-binding protein 3 (595 aa).

Positions 1–309 (MAPEIHMTGP…NAISRGDLPC (309 aa)) are GTPase domain (Globular). In terms of domain architecture, GB1/RHD3-type G spans 35–276 (TQPVVVVAIV…FCSYIFSNSK (242 aa)). GTP contacts are provided by residues 45–52 (GLYRTGKS), 67–69 (LGS), and 97–101 (DTEGL). The stretch at 482–595 (EKEKEIEVEC…KRYMSHKLKI (114 aa)) forms a coiled coil.

This sequence belongs to the TRAFAC class dynamin-like GTPase superfamily. GB1/RHD3 GTPase family. GB1 subfamily. Heterodimer with other family members, including GBP1, GBP2 and GBP5. Dimerization regulates subcellular location.

The protein localises to the cytoplasm. Its subcellular location is the perinuclear region. The protein resides in the golgi apparatus membrane. The catalysed reaction is GTP + H2O = GDP + phosphate + H(+). Its function is as follows. Interferon (IFN)-inducible GTPase that plays important roles in innate immunity against a diverse range of bacterial, viral and protozoan pathogens. Hydrolyzes GTP very efficiently; GDP rather than GMP is the major reaction product. Following infection, recruited to the pathogen-containing vacuoles or vacuole-escaped bacteria and acts as a positive regulator of inflammasome assembly by promoting the release of inflammasome ligands from bacteria. Acts by promoting lysis of pathogen-containing vacuoles, releasing pathogens into the cytosol. Following pathogen release in the cytosol, promotes recruitment of proteins that mediate bacterial cytolysis: this liberates ligands that are detected by inflammasomes, such as lipopolysaccharide (LPS) that activates the non-canonical CASP4/CASP11 inflammasome or double-stranded DNA (dsDNA) that activates the AIM2 inflammasome. Exhibits antiviral activity against influenza virus. Shows the most prominent antiviral activity in epithelial cells. The chain is Guanylate-binding protein 3 (GBP3) from Homo sapiens (Human).